A 428-amino-acid chain; its full sequence is L-glutamyl-[BtrI acyl-carrier protein] decarboxylase (428 aa).

Lys-49 is subject to N6-(pyridoxal phosphate)lysine. Pyridoxal 5'-phosphate contacts are provided by residues Gly-228, 269 to 272, and Tyr-375; that span reads ESGR. Residues Arg-272 and Tyr-375 each contribute to the substrate site.

This sequence belongs to the Orn/Lys/Arg decarboxylase class-II family. As to quaternary structure, homodimer. Pyridoxal 5'-phosphate is required as a cofactor.

It carries out the reaction gamma-L-glutamyl-[BtrI ACP] + H(+) = 4-aminobutanoyl-[BtrI ACP] + CO2. It functions in the pathway antibiotic biosynthesis; butirosin biosynthesis. Its function is as follows. Pyridoxal phosphate-dependent decarboxylase that catalyzes 1 step in the biosynthesis of the side chain of the aminoglycoside antibiotics in the biosynthetic pathway of butirosin. Able to decarboxylate L-ornithine, L-arginine, L-lysine, but not L-glutamate or any D-amino acids. Has low activity with substrates not bound to an acyl-carrier protein. The protein is L-glutamyl-[BtrI acyl-carrier protein] decarboxylase (btrK) of Niallia circulans (Bacillus circulans).